A 22-amino-acid chain; its full sequence is NADH-ubiquinone oxidoreductase 16 kDa subunit (22 aa).

As to quaternary structure, complex I is composed of about 45 different subunits.

It is found in the mitochondrion inner membrane. The enzyme catalyses a ubiquinone + NADH + 5 H(+)(in) = a ubiquinol + NAD(+) + 4 H(+)(out). Functionally, transfer of electrons from NADH to the respiratory chain. The immediate electron acceptor for the enzyme is believed to be ubiquinone. The protein is NADH-ubiquinone oxidoreductase 16 kDa subunit of Solanum tuberosum (Potato).